Consider the following 348-residue polypeptide: Uroporphyrinogen decarboxylase (348 aa).

Residues 28–32 (RQAGR), aspartate 78, tyrosine 154, threonine 209, and histidine 325 each bind substrate.

Belongs to the uroporphyrinogen decarboxylase family. Homodimer.

The protein localises to the cytoplasm. The enzyme catalyses uroporphyrinogen III + 4 H(+) = coproporphyrinogen III + 4 CO2. Its pathway is porphyrin-containing compound metabolism; protoporphyrin-IX biosynthesis; coproporphyrinogen-III from 5-aminolevulinate: step 4/4. Its function is as follows. Catalyzes the decarboxylation of four acetate groups of uroporphyrinogen-III to yield coproporphyrinogen-III. The protein is Uroporphyrinogen decarboxylase of Rhodopseudomonas palustris (strain BisB5).